The primary structure comprises 355 residues: Adenine deaminase (355 aa).

The Zn(2+) site is built by His23, His25, and His211. The active-site Proton donor is Glu214. Asp292 provides a ligand contact to Zn(2+). Asp293 is a binding site for substrate.

This sequence belongs to the metallo-dependent hydrolases superfamily. Adenosine and AMP deaminases family. Adenine deaminase type 2 subfamily. It depends on Zn(2+) as a cofactor.

The protein resides in the cytoplasm. Its subcellular location is the nucleus. The catalysed reaction is adenine + H2O + H(+) = hypoxanthine + NH4(+). Its function is as follows. Catalyzes the hydrolytic deamination of adenine to hypoxanthine. Plays an important role in the purine salvage pathway and in nitrogen catabolism. This Kluyveromyces lactis (strain ATCC 8585 / CBS 2359 / DSM 70799 / NBRC 1267 / NRRL Y-1140 / WM37) (Yeast) protein is Adenine deaminase.